We begin with the raw amino-acid sequence, 211 residues long: Large ribosomal subunit protein uL4 (211 aa).

Positions 46–55 (GNHATKTRSM) are enriched in polar residues. The disordered stretch occupies residues 46–89 (GNHATKTRSMVSGGGKKPWSQKGTGRARQGSTRAPHWVGGGTVH).

Belongs to the universal ribosomal protein uL4 family. In terms of assembly, part of the 50S ribosomal subunit.

Its function is as follows. One of the primary rRNA binding proteins, this protein initially binds near the 5'-end of the 23S rRNA. It is important during the early stages of 50S assembly. It makes multiple contacts with different domains of the 23S rRNA in the assembled 50S subunit and ribosome. In terms of biological role, forms part of the polypeptide exit tunnel. This chain is Large ribosomal subunit protein uL4, found in Leptospira interrogans serogroup Icterohaemorrhagiae serovar copenhageni (strain Fiocruz L1-130).